A 570-amino-acid polypeptide reads, in one-letter code: Hydroxylamine reductase (570 aa).

The [4Fe-4S] cluster site is built by Cys5, Cys8, Cys17, and Cys23. The hybrid [4Fe-2O-2S] cluster site is built by His266, Glu290, Cys334, Cys425, Cys453, Cys478, Glu513, and Lys515. At Cys425 the chain carries Cysteine persulfide.

Belongs to the HCP family. [4Fe-4S] cluster serves as cofactor. Hybrid [4Fe-2O-2S] cluster is required as a cofactor.

Its subcellular location is the cytoplasm. It catalyses the reaction A + NH4(+) + H2O = hydroxylamine + AH2 + H(+). Its function is as follows. Catalyzes the reduction of hydroxylamine to form NH(3) and H(2)O. This chain is Hydroxylamine reductase, found in Clostridium botulinum (strain Kyoto / Type A2).